Consider the following 635-residue polypeptide: MVSIRLPDGSVRQYEHPVTVAEVAASIGPGLAKAALGGKIDGELVDTSALIDHDVALAIVTDKDADGLDIIRHSTAHLLAYAVKDLFPEAQVTIGPVIDNGFYYDFSYSRPFTPEDLEKIEKRMQELAKKDEPVSRRVVSRDEAADYFKSIGEKYKAEIIESIPASDDIKLYSHGGFTDLCRGPHVPSTGKLKVFKLMKVAGAYWRGDSKNEQLQRIYGTAWTKKEDQDAYLHMLEEAEKRDHRKLGKQLDLFHMQDESPGMVFWHPRGWTLWQQVEQYMRRRVNEAGYLEIKTPMIMDRSLWEASGHWQNYRDNMFTTESEKRDYAIKPMNCPGHVQVFNHGLRSYRDLPLRYAEFGSCHRNESSGALHGLMRVRGFVQDDAHIFCTEDQFISESIAFNTLAMSVYKDFGFDNVEIKLSLRPDARAGTDEIWDRAEQGLRDALTACGVTWEELPGEGAFYGPKVEYHIKDALGRSWQCGTLQLDMVLPERLGAEFVAEDNSRRRPIMLHRAIVGSMERFLGILIEHHAGAMPAWLAPMQVVVMNIAESQAEYAQSLAQSLQKQGVRVEADLRNEKISYKIREHTLEKVPYLLVVGDKERDAQTVAVRARGGIDLGVMPVDAFSERLRQDVQTFN.

The 61-residue stretch at 1–61 (MVSIRLPDGS…DHDVALAIVT (61 aa)) folds into the TGS domain. The segment at 242 to 533 (DHRKLGKQLD…LIEHHAGAMP (292 aa)) is catalytic. Zn(2+)-binding residues include Cys333, His384, and His510.

The protein belongs to the class-II aminoacyl-tRNA synthetase family. Homodimer. The cofactor is Zn(2+).

The protein localises to the cytoplasm. The enzyme catalyses tRNA(Thr) + L-threonine + ATP = L-threonyl-tRNA(Thr) + AMP + diphosphate + H(+). Its function is as follows. Catalyzes the attachment of threonine to tRNA(Thr) in a two-step reaction: L-threonine is first activated by ATP to form Thr-AMP and then transferred to the acceptor end of tRNA(Thr). Also edits incorrectly charged L-seryl-tRNA(Thr). The sequence is that of Threonine--tRNA ligase from Paraburkholderia phymatum (strain DSM 17167 / CIP 108236 / LMG 21445 / STM815) (Burkholderia phymatum).